A 1058-amino-acid polypeptide reads, in one-letter code: MSTAKLDFVRAYEKEVQNKWESDKQFEIDALDAPDAEHPKYLATFPYPYMNGRLHVGHVFTITKAEFMCQFQRLMGKRVLFPFAFHCTGMPIKACADKLKKEIEQFGCPPVFPVIEEKPIQEVTTAVKEDPLSFKSKKTKAVAKSGGAVYQWKIMQSLGISDEEIPMFADSAYWLNYFPPHCESDLKLLGVGVDWRRSFITTDVNGYYDSFVRWQFESLKALGKVKYGKRYSIWSTIDDQQCADHERAQGEGVGPQNYTLIKLEVVEPIPECLKEIHSQGKKIYLVPGTLRPETMYGQTNCWILPTGKYGAFEMANGDIFVCTERSARNMSYQQMTTGKGEYKCLAKFEGSDILGAALKAPLAINPIVYVLPMLTIDENKGTGVVTSVPSDSPDDYASLQDLKAKAPLRAKFSIKDEWVLPFEVVPIIDIPGYSNESAVRAYKDLGIKSQNDRALLDQAKDLCYQKGFNDGVMSVGPYAGRKVSEVKKIIKDEMVASGQAVDYSEPTSKVVSRSGDECVVALSDQWYINYGDDDIEWKNQTIKQLESMEFYSAETKKKFEIALGWMNQWACSRSFGLGTHLPWDEKFLIESLSDSTIYMAFYTVAHLLQGDVNGSKPGSAGITPKQMTSACWDYVLMGKPYPEGCEVSEEKLKELKKEFTYWYPVDIRVSGADLIQNHLTFFLYTHAAIFEKKFQPKSIRANGFVNLNGEKMSKSTGNFLTLVDSVAKFSADGTRVALADAGDSIEDANFVDQTAVTSLLKLHTQIQWVQETLDSIDKFRSGPLDRIQDTIFESEINNIIVESEKAYQKTNFRDALHLVFFDLQNARDHYKVTTLDQMHKDLVLRFIEVQALLIYPIAPHFAQKLFNMLGKGNILSAGWPKAGAIDYEALKKNNYVQQTIYNFRMKLQVYQKAKLKGKPAGTKAIPDQSTIIVSKSYPKWQQDVLEYLATIYNEDSKSFTKDNNAIAEELLSREEMKPHKKNLMGFVASAIQNVKESGKDALQTSLSFDETSTLTDNIDYICKTLELTSFDVKDFNEIPQASQSKIQPIPGKPQFQFV.

Residues 48-58 (PYMNGRLHVGH) carry the 'HIGH' region motif. The short motif at 711 to 715 (KMSKS) is the 'KMSKS' region element. Lys-714 lines the ATP pocket.

Belongs to the class-I aminoacyl-tRNA synthetase family.

The protein localises to the cytoplasm. The catalysed reaction is tRNA(Leu) + L-leucine + ATP = L-leucyl-tRNA(Leu) + AMP + diphosphate. The chain is Leucine--tRNA ligase, cytoplasmic (leuS) from Dictyostelium discoideum (Social amoeba).